The chain runs to 235 residues: Vacuolar protein sorting-associated protein 60.2 (235 aa).

The segment at M1 to S30 is disordered. A compositionally biased stretch (basic and acidic residues) spans A20–S30. A coiled-coil region spans residues L99–T148. The tract at residues D174–G235 is disordered.

The protein belongs to the SNF7 family.

It localises to the endosome. It is found in the multivesicular body membrane. Probable peripherally associated component of the endosomal sorting required for transport complex III (ESCRT-III) which is involved in multivesicular bodies (MVBs) formation and sorting of endosomal cargo proteins into MVBs. The polypeptide is Vacuolar protein sorting-associated protein 60.2 (Arabidopsis thaliana (Mouse-ear cress)).